Reading from the N-terminus, the 201-residue chain is Ribonuclease MRP protein subunit RMP1 (201 aa).

A helical membrane pass occupies residues 86–108 (YWQFNGVIALGQFVTLGCTLVTL).

As to quaternary structure, component of RNase MRP complex which consists of an RNA moiety and at least 10 protein subunits including POP1, POP3, POP4, POP5, POP6, POP7, POP8, RMP1, RPP1 and SNM1, many of which are shared with the RNase P complex.

The protein localises to the membrane. It localises to the cytoplasm. It is found in the nucleus. In terms of biological role, functions as part of ribonuclease MRP (RNase MRP), which is involved in rRNA processing in mitochondria. The chain is Ribonuclease MRP protein subunit RMP1 from Saccharomyces cerevisiae (strain ATCC 204508 / S288c) (Baker's yeast).